The following is a 264-amino-acid chain: 3-methyl-2-oxobutanoate hydroxymethyltransferase (264 aa).

Mg(2+) contacts are provided by Asp45 and Asp84. 3-methyl-2-oxobutanoate contacts are provided by residues 45–46 (DS), Asp84, and Lys112. Residue Glu114 participates in Mg(2+) binding. Glu181 acts as the Proton acceptor in catalysis.

It belongs to the PanB family. As to quaternary structure, homodecamer; pentamer of dimers. It depends on Mg(2+) as a cofactor.

The protein resides in the cytoplasm. It carries out the reaction 3-methyl-2-oxobutanoate + (6R)-5,10-methylene-5,6,7,8-tetrahydrofolate + H2O = 2-dehydropantoate + (6S)-5,6,7,8-tetrahydrofolate. It functions in the pathway cofactor biosynthesis; (R)-pantothenate biosynthesis; (R)-pantoate from 3-methyl-2-oxobutanoate: step 1/2. In terms of biological role, catalyzes the reversible reaction in which hydroxymethyl group from 5,10-methylenetetrahydrofolate is transferred onto alpha-ketoisovalerate to form ketopantoate. This is 3-methyl-2-oxobutanoate hydroxymethyltransferase from Edwardsiella ictaluri (strain 93-146).